We begin with the raw amino-acid sequence, 585 residues long: S-antigen protein (585 aa).

The N-terminal stretch at 1-23 is a signal peptide; that stretch reads MNRILSVTLCLFFIYLYIYKTYG. The disordered stretch occupies residues 51-585; that stretch reads NGKGQKYEDL…NSIINMLIGM (535 aa). Residues 59–85 are compositionally biased toward acidic residues; it reads DLEEEKEGENDDEEDSNSEESNNDEEN. Residues 96 to 113 are compositionally biased toward basic and acidic residues; that stretch reads QETHGSEDEVSNGREDKV. Repeat copies occupy residues 102–109, 110–117, 118–125, 126–133, 134–141, 142–149, 150–157, 158–165, 166–173, 174–181, 182–189, 190–197, 198–205, 206–213, 214–221, 222–229, 230–237, 238–245, 246–253, 254–261, 262–269, 270–277, 278–285, 286–293, 294–301, 302–309, 310–317, 318–325, 326–333, 334–341, 342–349, 350–357, 358–365, 366–373, 374–381, 382–389, 390–397, 398–405, 406–413, 414–421, 422–429, 430–437, 438–445, 446–453, 454–461, 462–469, 470–477, 478–485, 486–493, 494–501, 502–509, 510–517, 518–525, 526–533, 534–541, and 542–549. The interval 102–549 is 56 X 8 AA tandem repeats of E-D-[EK]-V-S-N-G-[RG]; the sequence is EDEVSNGRED…GREDEVSNGR (448 aa). The span at 117–129 shows a compositional bias: acidic residues; that stretch reads GEDEVSNGGEDEV. 2 stretches are compositionally biased toward basic and acidic residues: residues 194-209 and 218-233; these read SNGR…EDKV. Over residues 274-297 the composition is skewed to basic and acidic residues; sequence SNGREDKVSNGREDEVSNGREDKV. Positions 322 to 337 are enriched in basic and acidic residues; it reads SNGREDKVSNGREDKV. 2 stretches are compositionally biased toward basic and acidic residues: residues 362–393 and 402–417; these read SNGR…EDKV. Residues 442–465 show a composition bias toward basic and acidic residues; it reads SNGREDKVSNGREDKVSNGREDKV. Over residues 469 to 481 the composition is skewed to acidic residues; the sequence is GEDEVSNGGEDEV. 2 stretches are compositionally biased toward basic and acidic residues: residues 530-553 and 560-569; these read SNGR…EDKG and ELSHNSESHT. The span at 576 to 585 shows a compositional bias: low complexity; that stretch reads NSIINMLIGM.

It localises to the parasitophorous vacuole. In terms of biological role, s antigens are soluble heat-stable proteins present in the sera of some infected individuals. The polypeptide is S-antigen protein (Plasmodium falciparum (isolate 3D7)).